We begin with the raw amino-acid sequence, 241 residues long: Ribose-5-phosphate isomerase A (241 aa).

Substrate-binding positions include 29 to 32 (TGTT), 84 to 87 (DGAD), and 97 to 100 (KGGG). Catalysis depends on Glu-106, which acts as the Proton acceptor. Lys-124 is a binding site for substrate.

The protein belongs to the ribose 5-phosphate isomerase family. Homodimer.

It carries out the reaction aldehydo-D-ribose 5-phosphate = D-ribulose 5-phosphate. Its pathway is carbohydrate degradation; pentose phosphate pathway; D-ribose 5-phosphate from D-ribulose 5-phosphate (non-oxidative stage): step 1/1. Functionally, catalyzes the reversible conversion of ribose-5-phosphate to ribulose 5-phosphate. The polypeptide is Ribose-5-phosphate isomerase A (Thermoplasma volcanium (strain ATCC 51530 / DSM 4299 / JCM 9571 / NBRC 15438 / GSS1)).